Reading from the N-terminus, the 217-residue chain is Large ribosomal subunit protein uL3 (217 aa).

The disordered stretch occupies residues 134–154 (DATHGNSLSHRAPGSIGQCQT). The residue at position 153 (Gln-153) is an N5-methylglutamine.

Belongs to the universal ribosomal protein uL3 family. In terms of assembly, part of the 50S ribosomal subunit. Forms a cluster with proteins L14 and L19. In terms of processing, methylated by PrmB.

One of the primary rRNA binding proteins, it binds directly near the 3'-end of the 23S rRNA, where it nucleates assembly of the 50S subunit. In Coxiella burnetii (strain Dugway 5J108-111), this protein is Large ribosomal subunit protein uL3.